The following is a 116-amino-acid chain: Translation initiation factor 1A (116 aa).

Residues 1–25 are disordered; that stretch reads MRCLSKKHQKQGDEHGGEIPLPNPD. The S1-like domain maps to 17-91; that stretch reads GEIPLPNPDE…EKGEVVYKYG (75 aa).

It belongs to the eIF-1A family.

Functionally, seems to be required for maximal rate of protein biosynthesis. Enhances ribosome dissociation into subunits and stabilizes the binding of the initiator Met-tRNA(I) to 40 S ribosomal subunits. This Desulfurococcus amylolyticus (strain DSM 18924 / JCM 16383 / VKM B-2413 / 1221n) (Desulfurococcus kamchatkensis) protein is Translation initiation factor 1A (eIF1A).